A 377-amino-acid chain; its full sequence is Beta-lactamase (377 aa).

Residues Met-1–Ala-19 form the signal peptide. Ser-80 (acyl-ester intermediate) is an active-site residue. Residues Ser-80, Gln-136, Tyr-166, Asn-168, Ala-334, and Asn-359 each coordinate a beta-lactam.

This sequence belongs to the class-C beta-lactamase family. In terms of assembly, monomer.

The protein localises to the periplasm. The catalysed reaction is a beta-lactam + H2O = a substituted beta-amino acid. Inhibited by the beta-lactamase-blocking agents avibactam, enmetazobactam, relebactam, nacubactam, vaborbactam, taniborbactam, zidebactam, and beta-lactam-analog boronic acids, via a covalent binding to Ser-80. Inhibited by non-beta-lactam, benzo(b)thiophene-2-boronic acid (BZBTH2B) and various cyclic boronates. Not inhibited by clavulanic acid. Inhibited by O-aryloxycarbonyl hydroxamates, via cross-linking of the active site Ser-80 to Lys-331. Weakly inhibited by citric acid. Class C beta-lactamase which confers resistance to penicillins and cephalosporins. Has benzylpenicillin- and cephaloridine-hydrolyzing activity. Has weak cefuroxime, cefotaxime, cefoxitin and oxacillin-hydrolyzing activities. The chain is Beta-lactamase from Escherichia coli (strain K12).